The chain runs to 385 residues: MTERMILKVDHTGIDKPLLWTAILLALAGLVMVSSASLQIAETRLGDPFYYAMRHGIYLALGLGVGAFVYYAVPLALLERLRFVMLPVALVALVMVFIPGLGRTVNGSTRWIALPGLTIQASEIVKLCFVLYLAGYVAQRKAALETEWKAFLLPLGLLGVLMLLLLLEPDFGAVVVLGITAMGMLFLSGVPTLRFLLIGLIAVALGGLVAFAEPYRVARLMTFTDPWADQFGSGYQLTQSLIAFGRGHWFGVGLGNSVQKLFYLPEAHTDFVYAVMSEELGLLGNVALIGGFILLGWRVFRIGHRLEARGLLYHAYLVYGCAFVFCSQAFINLGVNMGLLPTKGLTLPFISYGGSSLLISAVMVGLILRAGAEADHLKARGRAAR.

The next 9 helical transmembrane spans lie at 18–38, 57–77, 81–101, 111–131, 157–177, 195–215, 280–300, 311–331, and 347–367; these read LLWT…SASL, IYLA…PLAL, LRFV…IPGL, WIAL…CFVL, LLGV…VVVL, FLLI…AEPY, LGLL…WRVF, LLYH…QAFI, and LPFI…VGLI.

Belongs to the SEDS family. FtsW subfamily.

Its subcellular location is the cell inner membrane. The catalysed reaction is [GlcNAc-(1-&gt;4)-Mur2Ac(oyl-L-Ala-gamma-D-Glu-L-Lys-D-Ala-D-Ala)](n)-di-trans,octa-cis-undecaprenyl diphosphate + beta-D-GlcNAc-(1-&gt;4)-Mur2Ac(oyl-L-Ala-gamma-D-Glu-L-Lys-D-Ala-D-Ala)-di-trans,octa-cis-undecaprenyl diphosphate = [GlcNAc-(1-&gt;4)-Mur2Ac(oyl-L-Ala-gamma-D-Glu-L-Lys-D-Ala-D-Ala)](n+1)-di-trans,octa-cis-undecaprenyl diphosphate + di-trans,octa-cis-undecaprenyl diphosphate + H(+). The protein operates within cell wall biogenesis; peptidoglycan biosynthesis. Peptidoglycan polymerase that is essential for cell division. The sequence is that of Probable peptidoglycan glycosyltransferase FtsW from Alcanivorax borkumensis (strain ATCC 700651 / DSM 11573 / NCIMB 13689 / SK2).